The primary structure comprises 466 residues: MIKPRTPPGVLELLPREQIAFQRMLDVIRRNYERFGFLPVETPVFELSDVLLTKSGGETERQVYFVQSTGTLANAAESGATRLPELALRFDLTVPLARYVAEYEHVLAFPFRRYQIQRVYRGERAQRGRFREFYQCDIDVIGKQTLSIRYDAEVLAVIHAVFSELGIGDFQVQLNNRKVLRGFLESQGVRDGELQLAVLREVDKLDKRGVLDVRDTLIGQGFGIPAAQVENILTFVATRSTSHADALARLDALIEDSGPGSHDMLRQGVAELREVLTLVNVLGVPEHAYRLNFSIARGLDYYTGTVYETSLINHPQIGSICSGGRYENLANHYTQSKLPGVGISIGLTRLFWQLRDAGLMDGIAESSVQAMVVLMDEATLDDALDIARCLRIGGINTEVQMEAKKVSKQFQYASRAGIRFVVLAGDDERARGVVAVKDLTREQQFEIPREELASTLQVELEQAKVM.

The protein belongs to the class-II aminoacyl-tRNA synthetase family. As to quaternary structure, homodimer.

It localises to the cytoplasm. The enzyme catalyses tRNA(His) + L-histidine + ATP = L-histidyl-tRNA(His) + AMP + diphosphate + H(+). This Xylella fastidiosa (strain M12) protein is Histidine--tRNA ligase.